Reading from the N-terminus, the 406-residue chain is uncharacterized protein (406 aa).

It is found in the plastid. It localises to the chloroplast. This is an uncharacterized protein from Euglena gracilis.